Here is a 1463-residue protein sequence, read N- to C-terminus: Chitin binding domain (ChtBD2) containing chtb-1 (1463 aa).

The first 17 residues, 1–17 (MLRNLILITLLVASGHG), serve as a signal peptide directing secretion. Positions 70-99 (SSVPSVPAENTQPQQHPKARKPASPNICEQ) are disordered. The 71-residue stretch at 94 to 164 (PNICEQDNGA…IVPKRMSSLS (71 aa)) folds into the Chitin-binding type-2 domain. A disulfide bridge connects residues cysteine 141 and cysteine 154. Disordered regions lie at residues 720–773 (IDSD…DFPI) and 841–869 (KNPK…FPDS). Polar residues predominate over residues 722–734 (SDTNSTTNPSQPE). Basic residues-rich tracts occupy residues 740–756 (NNTK…KPKK) and 843–853 (PKKRKTKRRKQ).

This chain is Chitin binding domain (ChtBD2) containing chtb-1, found in Caenorhabditis elegans.